A 117-amino-acid polypeptide reads, in one-letter code: Large ribosomal subunit protein uL18 (117 aa).

The protein belongs to the universal ribosomal protein uL18 family. Part of the 50S ribosomal subunit; part of the 5S rRNA/L5/L18/L25 subcomplex. Contacts the 5S and 23S rRNAs.

This is one of the proteins that bind and probably mediate the attachment of the 5S RNA into the large ribosomal subunit, where it forms part of the central protuberance. In Chromobacterium violaceum (strain ATCC 12472 / DSM 30191 / JCM 1249 / CCUG 213 / NBRC 12614 / NCIMB 9131 / NCTC 9757 / MK), this protein is Large ribosomal subunit protein uL18.